A 609-amino-acid polypeptide reads, in one-letter code: Dihydroxy-acid dehydratase (609 aa).

Residue aspartate 81 coordinates Mg(2+). Residue cysteine 122 participates in [2Fe-2S] cluster binding. Positions 123 and 124 each coordinate Mg(2+). Position 124 is an N6-carboxylysine (lysine 124). Residue cysteine 195 coordinates [2Fe-2S] cluster. Glutamate 491 lines the Mg(2+) pocket. The active-site Proton acceptor is the serine 517.

Belongs to the IlvD/Edd family. In terms of assembly, homodimer. Requires [2Fe-2S] cluster as cofactor. Mg(2+) is required as a cofactor.

It catalyses the reaction (2R)-2,3-dihydroxy-3-methylbutanoate = 3-methyl-2-oxobutanoate + H2O. It carries out the reaction (2R,3R)-2,3-dihydroxy-3-methylpentanoate = (S)-3-methyl-2-oxopentanoate + H2O. It functions in the pathway amino-acid biosynthesis; L-isoleucine biosynthesis; L-isoleucine from 2-oxobutanoate: step 3/4. Its pathway is amino-acid biosynthesis; L-valine biosynthesis; L-valine from pyruvate: step 3/4. Functions in the biosynthesis of branched-chain amino acids. Catalyzes the dehydration of (2R,3R)-2,3-dihydroxy-3-methylpentanoate (2,3-dihydroxy-3-methylvalerate) into 2-oxo-3-methylpentanoate (2-oxo-3-methylvalerate) and of (2R)-2,3-dihydroxy-3-methylbutanoate (2,3-dihydroxyisovalerate) into 2-oxo-3-methylbutanoate (2-oxoisovalerate), the penultimate precursor to L-isoleucine and L-valine, respectively. This chain is Dihydroxy-acid dehydratase, found in Acinetobacter baumannii (strain AB307-0294).